We begin with the raw amino-acid sequence, 208 residues long: Proheparin-binding EGF-like growth factor (208 aa).

The signal sequence occupies residues 1-23 (MKLLPSVVLKLFLAAVLSALVTG). A propeptide spanning residues 24–62 (ESLERLRRGLAAATSNPDPPTGTTNQLLPTGADRAQEVQ) is cleaved from the precursor. Over 24 to 160 (ESLERLRRGL…ENPLYTYDHT (137 aa)) the chain is Extracellular. Residues 82–103 (ALATPGKEKNGKKKRKGKGLGK) are disordered. T85 is a glycosylation site (O-linked (GalNAc...) threonine). Basic residues predominate over residues 91-102 (NGKKKRKGKGLG). The 41-residue stretch at 104–144 (KRDPCLKKYKDYCIHGECRYLKELRIPSCHCLPGYHGQRCH) folds into the EGF-like domain. Disulfide bonds link C108/C121, C116/C132, and C134/C143. A propeptide spans 149 to 208 (PVENPLYTYDHTTVLAVVAVVLSSVCLLVIVGLLMFRYHRRGGYDLESEEKVKLGMASSH) (C-terminal). A helical membrane pass occupies residues 161–184 (TVLAVVAVVLSSVCLLVIVGLLMF). Over 185–208 (RYHRRGGYDLESEEKVKLGMASSH) the chain is Cytoplasmic.

As to quaternary structure, interacts with FBLN1. Interacts with EGFR and ERBB4. Post-translationally, O-glycosylated. In terms of tissue distribution, most abundant in skeletal muscle, lung, spleen brain and heart.

It is found in the secreted. The protein resides in the extracellular space. The protein localises to the cell membrane. Growth factor that mediates its effects via EGFR, ERBB2 and ERBB4. Required for normal cardiac valve formation and normal heart function. Promotes smooth muscle cell proliferation. May be involved in macrophage-mediated cellular proliferation. It is mitogenic for fibroblasts, but not endothelial cells. It is able to bind EGF receptor/EGFR with higher affinity than EGF itself and is a far more potent mitogen for smooth muscle cells than EGF. Also acts as a diphtheria toxin receptor. In Rattus norvegicus (Rat), this protein is Proheparin-binding EGF-like growth factor (Hbegf).